Reading from the N-terminus, the 284-residue chain is Protein G1-like9 (284 aa).

Residues 1–69 are disordered; it reads MEPSPDAPRA…PAAAGLSRYE (69 aa). 2 stretches are compositionally biased toward low complexity: residues 13–32 and 40–63; these read AEEQPGPSSSASAPAPAASS and QSQAQQQVQEAQPQPLAQQAPAAA. Positions 67–194 constitute an ALOG domain; the sequence is RYESQKRRDW…ARGIPYEKKR (128 aa). The short motif at 192-196 is the Nuclear localization signal element; it reads KKRKR. The interval 209 to 284 is disordered; the sequence is VAPPPVVTAP…SAAKGSATSS (76 aa). Low complexity predominate over residues 246-284; sequence TTPAASPTTPPATSVGTTTAAATAAAAKGSAAKGSATSS.

It belongs to the plant homeotic and developmental regulators ALOG protein family.

Its subcellular location is the nucleus. Functionally, probable transcription regulator that acts as a developmental regulator by promoting cell growth in response to light. The sequence is that of Protein G1-like9 from Oryza sativa subsp. indica (Rice).